The sequence spans 533 residues: Probable G-protein coupled receptor Mth-like 14 (533 aa).

The signal sequence occupies residues 1 to 23; it reads MNLGHWNFLLALISLQTFFNASA. 5 N-linked (GlcNAc...) asparagine glycosylation sites follow: N20, N29, N30, N36, and N47. Over 24–242 the chain is Extracellular; that stretch reads QISTVNNSSK…QVEEQIAFAK (219 aa). Residues 86 to 108 are disordered; sequence VQSPVDNPLDPADCSQREKYRKQ. Cysteines 120 and 216 form a disulfide. Residues N133, N178, and N206 are each glycosylated (N-linked (GlcNAc...) asparagine). A helical transmembrane segment spans residues 243-263; sequence VVFVAVLMLISMPCLLLVSYL. Residues 264 to 279 are Cytoplasmic-facing; the sequence is HMTLRLLRNLHGLSLS. The chain crosses the membrane as a helical span at residues 280 to 300; it reads LMSLCLASGYFVHSVVHIYGI. Topologically, residues 301 to 303 are extracellular; sequence PNQ. The helical transmembrane segment at 304-324 threads the bilayer; the sequence is GFIGYVIQFCILSYFFWYLCI. Residues 325-347 lie on the Cytoplasmic side of the membrane; the sequence is CFNVLLNVWYKLPCCIQCSKSWA. Residues 348-368 form a helical membrane-spanning segment; that stretch reads TFNFACYAVFAFSGPATIVAL. Topologically, residues 369 to 395 are extracellular; that stretch reads TVQKGLPGMPSYFLQGLTESIRDSQRY. Residues 396–416 traverse the membrane as a helical segment; that stretch reads FIPPVSTILFLSFLLNIISFF. The Cytoplasmic portion of the chain corresponds to 417 to 451; sequence GFQRISGYAKAEKNIQERKCLFDQQKYEDVKKDAK. The helical transmembrane segment at 452 to 472 threads the bilayer; it reads CVSLLGIIMVVSWLLEIITFY. Residues 473 to 480 lie on the Extracellular side of the membrane; the sequence is SGSNSNYL. A helical transmembrane segment spans residues 481–501; it reads ILCDMVNGLQGVWVLLIFLVV. Over 502–533 the chain is Cytoplasmic; it reads RRRRTIILRWWYDRGSHEIEGTELQALSNSPT.

Belongs to the G-protein coupled receptor 2 family. Mth subfamily.

It localises to the cell membrane. The chain is Probable G-protein coupled receptor Mth-like 14 (mthl14) from Drosophila melanogaster (Fruit fly).